The chain runs to 352 residues: MRFTALATAILPLACNVLALPAKTGEAPKLDVSLSQVDNTLIKAVVKNTGSEDITFVHLNFFRDKAPVKKVSLFRNATELPFQGIKQRFRTEGLTEDALTVLAPGESIEDEFDIAATSDLSEGGSITISTDGFVPIATGNKITGSVPYSSNELSIEVDAAQAASVASAVKPLDKRTKVASCSGTRSSALSTALKNTVSLANAAASAAQSGSSSRFQEYFKTTSSSVRSTVAARFRAVASEASSTSSGSTTYYCTDTYGYCSSNVLAYTLPAYNIIANCDIYYTYLSALTRTCHAQDQATTTLHEFTHAPGVYSPGTDDLGYGYDAATALSSSQALNNADTYALFANAVNLNC.

An N-terminal signal peptide occupies residues 1 to 19 (MRFTALATAILPLACNVLA). The propeptide occupies 20-175 (LPAKTGEAPK…ASAVKPLDKR (156 aa)). Disulfide bonds link C181/C253 and C260/C278. H303 serves as a coordination point for Zn(2+). The active site involves E304. Residues H307 and D318 each coordinate Zn(2+).

The protein belongs to the peptidase M35 family. The cofactor is Zn(2+).

It is found in the secreted. The enzyme catalyses Preferential cleavage of bonds with hydrophobic residues in P1'. Also 3-Asn-|-Gln-4 and 8-Gly-|-Ser-9 bonds in insulin B chain.. Its function is as follows. Secreted metalloproteinase that allows assimilation of proteinaceous substrates. Shows high activities on basic nuclear substrates such as histone and protamine. This chain is Neutral protease 2 homolog ATEG_04941, found in Aspergillus terreus (strain NIH 2624 / FGSC A1156).